The following is a 321-amino-acid chain: Chitinase-like protein 1 (321 aa).

An N-terminal signal peptide occupies residues 1 to 26 (MVTIRSGSIVILVLLAVSFLALVANG). Cysteine 42 and cysteine 55 are joined by a disulfide. N-linked (GlcNAc...) asparagine glycosylation occurs at asparagine 57. Cysteine 157 and cysteine 167 are oxidised to a cystine. 2 N-linked (GlcNAc...) asparagine glycosylation sites follow: asparagine 208 and asparagine 244. Cysteine 267 and cysteine 304 are oxidised to a cystine. Residues 297–321 (GPNDELSCAEQKPFNPSTVPSSSSS) are disordered. The span at 310-321 (FNPSTVPSSSSS) shows a compositional bias: polar residues.

The protein belongs to the glycosyl hydrolase 19 family. Mostly expressed in seedlings shoots and roots, stems, and flowers, and, to a lower extent, in flowers, mature leaves and roots.

The protein localises to the secreted. In terms of biological role, no chitinase activity. Essential for normal plant growth and development. Regulates cell expansion extent and differentiation at least in roots and hypocotyls. Prevents lignin accumulation in the pith. May modulate ethylene-mediated regulation during development. Probably required to establish thermotolerance acclimation. Plays a role for controlled anisotropic cell expansion in the regulation of waving during root gravitropism and thigmotropism. Involved in the root system architecture adaptation to multiple environmental conditions such as nitrate. Contributes to salt tolerance and possibly to drought by preventing the overaccumulation of sodium ions. The chain is Chitinase-like protein 1 (CTL1) from Arabidopsis thaliana (Mouse-ear cress).